The sequence spans 816 residues: Molybdenum cofactor sulfurase (816 aa).

Lys-273 carries the post-translational modification N6-(pyridoxal phosphate)lysine. Residue Cys-427 is part of the active site. Positions 647-812 (NSDSQSHSCI…IRVGEEIIPN (166 aa)) constitute an MOSC domain.

This sequence belongs to the class-V pyridoxal-phosphate-dependent aminotransferase family. MOCOS subfamily. Pyridoxal 5'-phosphate serves as cofactor. In terms of tissue distribution, ubiquitously expressed.

The catalysed reaction is Mo-molybdopterin + L-cysteine + AH2 = thio-Mo-molybdopterin + L-alanine + A + H2O. Its pathway is cofactor biosynthesis; molybdopterin biosynthesis. Its function is as follows. Sulfurates the molybdenum cofactor. Sulfation of molybdenum is essential for xanthine dehydrogenase (XDH) and aldehyde oxidase (ADO) enzymes in which molybdenum cofactor is liganded by 1 oxygen and 1 sulfur atom in active form. The protein is Molybdenum cofactor sulfurase (FLACCA) of Solanum lycopersicum (Tomato).